The sequence spans 527 residues: Glutamate--cysteine ligase (527 aa).

Belongs to the glutamate--cysteine ligase type 1 family. Type 1 subfamily.

It carries out the reaction L-cysteine + L-glutamate + ATP = gamma-L-glutamyl-L-cysteine + ADP + phosphate + H(+). Its pathway is sulfur metabolism; glutathione biosynthesis; glutathione from L-cysteine and L-glutamate: step 1/2. The polypeptide is Glutamate--cysteine ligase (Pseudomonas paraeruginosa (strain DSM 24068 / PA7) (Pseudomonas aeruginosa (strain PA7))).